The sequence spans 458 residues: UDP-N-acetylmuramate--L-alanine ligase (458 aa).

112 to 118 (GTHGKTT) contributes to the ATP binding site.

The protein belongs to the MurCDEF family.

The protein localises to the cytoplasm. The enzyme catalyses UDP-N-acetyl-alpha-D-muramate + L-alanine + ATP = UDP-N-acetyl-alpha-D-muramoyl-L-alanine + ADP + phosphate + H(+). It functions in the pathway cell wall biogenesis; peptidoglycan biosynthesis. Functionally, cell wall formation. The sequence is that of UDP-N-acetylmuramate--L-alanine ligase from Geotalea daltonii (strain DSM 22248 / JCM 15807 / FRC-32) (Geobacter daltonii).